The primary structure comprises 625 residues: Probable receptor-like protein kinase At1g11050 (625 aa).

The first 20 residues, 1 to 20 (MPNSILFLLLSFLYLTNCVA), serve as a signal peptide directing secretion. Topologically, residues 21–227 (QSPSQTCPLD…PLNSKKKRHT (207 aa)) are extracellular. N-linked (GlcNAc...) asparagine glycosylation is found at Asn-40, Asn-106, Asn-121, and Asn-177. A helical transmembrane segment spans residues 228-248 (VALALGITGAIFGALVIAGLI). The Cytoplasmic portion of the chain corresponds to 249–625 (CLYFRFGKAV…LQIHSGDMLR (377 aa)). The Protein kinase domain occupies 295–555 (FSQKNFIGRG…NPKGIMERFL (261 aa)). ATP-binding positions include 301 to 309 (IGRGGFGFV) and Lys-323. Catalysis depends on Asp-426, which acts as the Proton acceptor.

This sequence belongs to the protein kinase superfamily. Ser/Thr protein kinase family.

The protein resides in the membrane. The enzyme catalyses L-seryl-[protein] + ATP = O-phospho-L-seryl-[protein] + ADP + H(+). It carries out the reaction L-threonyl-[protein] + ATP = O-phospho-L-threonyl-[protein] + ADP + H(+). This chain is Probable receptor-like protein kinase At1g11050, found in Arabidopsis thaliana (Mouse-ear cress).